Here is a 69-residue protein sequence, read N- to C-terminus: UPF0346 protein YuiB (69 aa).

The protein belongs to the UPF0346 family.

This chain is UPF0346 protein YuiB (yuiB), found in Lactococcus lactis subsp. lactis (strain IL1403) (Streptococcus lactis).